The primary structure comprises 344 residues: MNPLALTIFLLSLAIGTTITLSSFHWLLAWIGLEINTLAIIPLMTKTPHPRAIEAATKYFLTQAAASALVLFSSLISAWQTGEWSINSLMDLPMNILSIALMMKLGLAPLHFWIPEVLQGISLPTGLILSTWQKIAPMALLLQTSHLINLNLTIALGLTSIMVGGWGGIGQTQLRKIMAFSSIGHLGWIIVILKFDPQLSLLNFVLYIIMTAAMFMSLTTISATKMLEISTSWSKTPALTTTTMLILLSLAGLPPLTGFTPKLLITLELVKQNATLLAVMVMFISLLALFFYIRLTYVVTLTLSPNTPNSLLTWRTASRSYSTTAIMNTMALILLPITPTLLLL.

Helical transmembrane passes span 1–21 (MNPL…TITL), 24–44 (FHWL…IPLM), 59–79 (YFLT…ISAW), 94–114 (MNIL…HFWI), 121–141 (ISLP…MALL), 150–170 (LNLT…GGIG), 177–197 (IMAF…KFDP), 201–221 (LLNF…LTTI), 245–265 (LILL…KLLI), 273–293 (NATL…FFYI), and 324–344 (TAIM…LLLL).

It belongs to the complex I subunit 2 family.

The protein resides in the mitochondrion inner membrane. It catalyses the reaction a ubiquinone + NADH + 5 H(+)(in) = a ubiquinol + NAD(+) + 4 H(+)(out). Its function is as follows. Core subunit of the mitochondrial membrane respiratory chain NADH dehydrogenase (Complex I) that is believed to belong to the minimal assembly required for catalysis. Complex I functions in the transfer of electrons from NADH to the respiratory chain. The immediate electron acceptor for the enzyme is believed to be ubiquinone. The protein is NADH-ubiquinone oxidoreductase chain 2 (MT-ND2) of Aquarana catesbeiana (American bullfrog).